A 309-amino-acid polypeptide reads, in one-letter code: Glutaminase (309 aa).

The substrate site is built by Ser-64, Asn-114, Glu-160, Asn-167, Tyr-191, Tyr-243, and Val-261.

This sequence belongs to the glutaminase family. As to quaternary structure, homotetramer.

The enzyme catalyses L-glutamine + H2O = L-glutamate + NH4(+). This chain is Glutaminase, found in Rhizobium rhizogenes (strain K84 / ATCC BAA-868) (Agrobacterium radiobacter).